We begin with the raw amino-acid sequence, 618 residues long: Probable Xaa-Pro aminopeptidase P (618 aa).

Aspartate 414, aspartate 425, glutamate 523, and glutamate 537 together coordinate Mn(2+).

It belongs to the peptidase M24B family. Mn(2+) serves as cofactor.

The catalysed reaction is Release of any N-terminal amino acid, including proline, that is linked to proline, even from a dipeptide or tripeptide.. In terms of biological role, catalyzes the removal of a penultimate prolyl residue from the N-termini of peptides. In Metarhizium acridum (strain CQMa 102), this protein is Probable Xaa-Pro aminopeptidase P (AMPP).